We begin with the raw amino-acid sequence, 355 residues long: NADH dehydrogenase [ubiquinone] 1 alpha subcomplex subunit 10, mitochondrial (355 aa).

A mitochondrion-targeting transit peptide spans 1-35 (MALRLLKLGATSASARVVAAGAQRVRGIHSSGQCK). Phosphoserine; by PINK1 is present on serine 250. At lysine 285 the chain carries N6-succinyllysine.

It belongs to the complex I NDUFA10 subunit family. As to quaternary structure, complex I is composed of 45 different subunits. This a component of the hydrophobic protein fraction. The cofactor is FAD. Post-translationally, phosphorylation at Ser-250 by PINK1 is required for the binding and/or reduction of the complex I substrate ubiquinone.

The protein localises to the mitochondrion matrix. Its function is as follows. Accessory subunit of the mitochondrial membrane respiratory chain NADH dehydrogenase (Complex I), that is believed not to be involved in catalysis. Complex I functions in the transfer of electrons from NADH to the respiratory chain. The immediate electron acceptor for the enzyme is believed to be ubiquinone. The chain is NADH dehydrogenase [ubiquinone] 1 alpha subcomplex subunit 10, mitochondrial (NDUFA10) from Gorilla gorilla gorilla (Western lowland gorilla).